The primary structure comprises 206 residues: Homoserine/homoserine lactone efflux protein (206 aa).

Helical transmembrane passes span 5 to 25, 45 to 65, 68 to 88, 117 to 137, 148 to 168, and 182 to 202; these read WWFAYLLTSIILSLSPGSGAI, GLQTGLAIHIVLVGVGLGTLF, SVIAFEVLKWAGAAYLIWLGI, FVNLTNPKSIVFLAALFPQFI, IVLGVTTIVVDIIVMIGYATL, and MKALNKIFGSLFMLVGALLAS.

It belongs to the Rht family.

It is found in the cell membrane. Conducts the efflux of homoserine and homoserine lactone. In Escherichia coli O157:H7, this protein is Homoserine/homoserine lactone efflux protein (rhtB).